Consider the following 440-residue polypeptide: Serine hydroxymethyltransferase (440 aa).

(6S)-5,6,7,8-tetrahydrofolate-binding positions include Leu119 and 123-125; that span reads GHL. N6-(pyridoxal phosphate)lysine is present on Lys228. 370-372 contacts (6S)-5,6,7,8-tetrahydrofolate; it reads SPF.

This sequence belongs to the SHMT family. In terms of assembly, homodimer. Requires pyridoxal 5'-phosphate as cofactor.

The protein localises to the cytoplasm. It carries out the reaction (6R)-5,10-methylene-5,6,7,8-tetrahydrofolate + glycine + H2O = (6S)-5,6,7,8-tetrahydrofolate + L-serine. It participates in one-carbon metabolism; tetrahydrofolate interconversion. Its pathway is amino-acid biosynthesis; glycine biosynthesis; glycine from L-serine: step 1/1. Its function is as follows. Catalyzes the reversible interconversion of serine and glycine with tetrahydrofolate (THF) serving as the one-carbon carrier. This reaction serves as the major source of one-carbon groups required for the biosynthesis of purines, thymidylate, methionine, and other important biomolecules. Also exhibits THF-independent aldolase activity toward beta-hydroxyamino acids, producing glycine and aldehydes, via a retro-aldol mechanism. The polypeptide is Serine hydroxymethyltransferase (Chlorobium luteolum (strain DSM 273 / BCRC 81028 / 2530) (Pelodictyon luteolum)).